The chain runs to 382 residues: Mannitol-1-phosphate 5-dehydrogenase (382 aa).

Position 3-14 (3-14 (AVHFGAGNIGRG)) interacts with NAD(+).

It belongs to the mannitol dehydrogenase family.

It carries out the reaction D-mannitol 1-phosphate + NAD(+) = beta-D-fructose 6-phosphate + NADH + H(+). In Exiguobacterium sp. (strain ATCC BAA-1283 / AT1b), this protein is Mannitol-1-phosphate 5-dehydrogenase.